The following is a 167-amino-acid chain: MSKKPTKDKANGAKATKTIALNKRARHEYHLEERYEAGLALQGWEIKAIRAGRANIVDGYAYVRSGEIYLIGAQITPLIQASTHTVPVERRDRKLLLHRAEIDKVLTRVEREGYTLVPTALYWSSNKVKLEIALAKGKQNHDKRDAAKERDWQRDKQRVMRRHNRDA.

Residues 139 to 158 (QNHDKRDAAKERDWQRDKQR) show a composition bias toward basic and acidic residues. The tract at residues 139–167 (QNHDKRDAAKERDWQRDKQRVMRRHNRDA) is disordered.

The protein belongs to the SmpB family.

It localises to the cytoplasm. Its function is as follows. Required for rescue of stalled ribosomes mediated by trans-translation. Binds to transfer-messenger RNA (tmRNA), required for stable association of tmRNA with ribosomes. tmRNA and SmpB together mimic tRNA shape, replacing the anticodon stem-loop with SmpB. tmRNA is encoded by the ssrA gene; the 2 termini fold to resemble tRNA(Ala) and it encodes a 'tag peptide', a short internal open reading frame. During trans-translation Ala-aminoacylated tmRNA acts like a tRNA, entering the A-site of stalled ribosomes, displacing the stalled mRNA. The ribosome then switches to translate the ORF on the tmRNA; the nascent peptide is terminated with the 'tag peptide' encoded by the tmRNA and targeted for degradation. The ribosome is freed to recommence translation, which seems to be the essential function of trans-translation. The protein is SsrA-binding protein of Xanthomonas oryzae pv. oryzae (strain PXO99A).